Here is a 281-residue protein sequence, read N- to C-terminus: Putative phosphatase/phosphodiesterase MPN_349 (281 aa).

Residues D12, E43, N44, and N71 each contribute to the Fe cation site. The active-site Proton donor is H72. 3 residues coordinate Fe cation: H158, H183, and H185.

The protein belongs to the YmdB-like family. Requires Fe(3+) as cofactor.

This Mycoplasma pneumoniae (strain ATCC 29342 / M129 / Subtype 1) (Mycoplasmoides pneumoniae) protein is Putative phosphatase/phosphodiesterase MPN_349.